A 297-amino-acid chain; its full sequence is Formylmethanofuran--tetrahydromethanopterin formyltransferase (297 aa).

It belongs to the FTR family. As to quaternary structure, homotetramer.

The protein resides in the cytoplasm. It carries out the reaction N-formylmethanofuran + 5,6,7,8-tetrahydromethanopterin + H(+) = N(5)-formyl-5,6,7,8-tetrahydromethanopterin + methanofuran. The protein operates within one-carbon metabolism; methanogenesis from CO(2); 5,10-methenyl-5,6,7,8-tetrahydromethanopterin from CO(2): step 2/3. Functionally, catalyzes the reversible transfer of a formyl group from formylmethanofuran (formyl-MFR) to tetrahydromethanopterin (H(4)MPT) to produce 5-formyl tetrahydromethanopterin (5-formyl-H(4)MPT) and methanofuran (MFR). The chain is Formylmethanofuran--tetrahydromethanopterin formyltransferase from Methanosarcina mazei (strain ATCC BAA-159 / DSM 3647 / Goe1 / Go1 / JCM 11833 / OCM 88) (Methanosarcina frisia).